The sequence spans 375 residues: Glutamate 5-kinase (375 aa).

Lysine 3 lines the ATP pocket. Substrate is bound by residues serine 44, aspartate 131, and asparagine 143. ATP-binding positions include 163–164 and 205–211; these read SD and TGGMVTK. The PUA domain maps to 269 to 346; that stretch reads EGTLWVDDGA…GDIEALLGYR (78 aa).

The protein belongs to the glutamate 5-kinase family.

The protein resides in the cytoplasm. It catalyses the reaction L-glutamate + ATP = L-glutamyl 5-phosphate + ADP. It participates in amino-acid biosynthesis; L-proline biosynthesis; L-glutamate 5-semialdehyde from L-glutamate: step 1/2. Functionally, catalyzes the transfer of a phosphate group to glutamate to form L-glutamate 5-phosphate. In Rhodospirillum rubrum (strain ATCC 11170 / ATH 1.1.1 / DSM 467 / LMG 4362 / NCIMB 8255 / S1), this protein is Glutamate 5-kinase.